The chain runs to 576 residues: 3-hydroxy-3-methylglutaryl coenzyme A reductase 1 (576 aa).

Residues 1–35 (MDSRRRPSKPLLTSSGEVLHRKQASPVTDEDQIHR) form a disordered region. A run of 2 helical transmembrane segments spans residues 42-62 (ALPL…FSVA) and 89-109 (AIVS…IDFV). Residue E255 is the Charge relay system of the active site. The N-linked (GlcNAc...) asparagine glycan is linked to N319. Residues K387 and D463 each act as charge relay system in the active site. The helical transmembrane segment at 532 to 552 (LLATIVAGSVLAGELSLMSAI) threads the bilayer. Residue H561 is the Proton donor of the active site. Residue N565 is glycosylated (N-linked (GlcNAc...) asparagine).

Belongs to the HMG-CoA reductase family. Expressed in trichomes, leaves, flowers, roots and stems.

The protein resides in the endoplasmic reticulum membrane. Its subcellular location is the plastid. It localises to the chloroplast membrane. It is found in the peroxisome membrane. It catalyses the reaction (R)-mevalonate + 2 NADP(+) + CoA = (3S)-3-hydroxy-3-methylglutaryl-CoA + 2 NADPH + 2 H(+). It functions in the pathway metabolic intermediate biosynthesis; (R)-mevalonate biosynthesis; (R)-mevalonate from acetyl-CoA: step 3/3. Catalyzes the synthesis of mevalonate, the specific precursor of all isoprenoid compounds present in plants. Component of the triterpene saponins (e.g. ginsenosides or panaxosides) and phytosterols biosynthetic pathways. Promotes triterpenes accumulation in roots. This is 3-hydroxy-3-methylglutaryl coenzyme A reductase 1 from Cannabis sativa (Hemp).